The following is a 338-amino-acid chain: Putative acyl-[acyl-carrier-protein] desaturase DesA1 (338 aa).

Glu76, Glu107, His110, Glu167, Glu197, and His200 together coordinate Fe cation. The segment covering 314–328 (EARTGKKVSAHELHK) has biased composition (basic and acidic residues). The segment at 314-338 (EARTGKKVSAHELHKTAGKLAMSRR) is disordered.

It belongs to the fatty acid desaturase type 2 family. As to quaternary structure, homodimer. Fe(2+) serves as cofactor.

The protein localises to the cell surface. The protein operates within lipid metabolism; fatty acid metabolism. In terms of biological role, may be a desaturase involved in mycobacterial fatty acid biosynthesis. The chain is Putative acyl-[acyl-carrier-protein] desaturase DesA1 (desA1) from Mycobacterium tuberculosis (strain CDC 1551 / Oshkosh).